Reading from the N-terminus, the 1359-residue chain is Tripeptidyl-peptidase 2 (1359 aa).

The disordered stretch occupies residues 45-81 (AASTTTRGGPSPSAGVAPRAMPSSSSSPPSAAEGTTA). The segment covering 64 to 81 (AMPSSSSSPPSAAEGTTA) has biased composition (low complexity). In terms of domain architecture, Peptidase S8 spans 102–600 (EIGVDRFLAA…HGLLQVDRAF (499 aa)). Catalysis depends on charge relay system residues Asp-126, His-353, and Ser-539.

Belongs to the peptidase S8 family.

The catalysed reaction is Release of an N-terminal tripeptide from a polypeptide.. Functionally, serine protease that may function in the proteasome pathway. The chain is Tripeptidyl-peptidase 2 (TPP2) from Oryza sativa subsp. japonica (Rice).